The sequence spans 292 residues: E3 ubiquitin-protein ligase trim-21 (292 aa).

Residues 6–52 (CEICDDDFSSEEDGDHNPRNLKCSHTLCEGCIKKLLKNGRVVCPFCR) form an RING-type zinc finger. The B box-type zinc finger occupies 90 to 137 (NFPPKCVEHPYNVAEFACIESNCSSKNKLMCQTCEEFGAHKGHAKELL). Positions 95, 98, 123, and 129 each coordinate Zn(2+). A coiled-coil region spans residues 152–179 (INQLKLNIQNCTVKKNELEEAVVKSEQL).

This sequence belongs to the TRIM/RBCC family. As to quaternary structure, interacts with E2 ubiquitin-conjugating enzyme ubc-21. Interacts with ced-6; this mediates interaction of trim-21 with ced-1 and is required for ced-1 ubiquitination. Interacts with nck-1; the interaction is required for ced-1 ubiquitination. In early larva, observed mainly in pharyngeal and body wall muscle cells.

It localises to the cytoplasm. It carries out the reaction S-ubiquitinyl-[E2 ubiquitin-conjugating enzyme]-L-cysteine + [acceptor protein]-L-lysine = [E2 ubiquitin-conjugating enzyme]-L-cysteine + N(6)-ubiquitinyl-[acceptor protein]-L-lysine.. The protein operates within protein modification; protein ubiquitination. In terms of biological role, E3 ubiquitin-protein ligase which catalyzes 'Lys-48'-linked polyubiquitination of ced-1, promoting its proteasomal degradation to maintain appropriate ced-1 levels for apoptotic cell clearance. Acts together with E2 ubiquitin-conjugating enzyme ubc-21. This is E3 ubiquitin-protein ligase trim-21 from Caenorhabditis elegans.